Reading from the N-terminus, the 63-residue chain is Large ribosomal subunit protein uL29 (63 aa).

This sequence belongs to the universal ribosomal protein uL29 family.

This Herminiimonas arsenicoxydans protein is Large ribosomal subunit protein uL29.